We begin with the raw amino-acid sequence, 477 residues long: Secreted RxLR effector protein 102 (477 aa).

Residues 1-20 form the signal peptide; that stretch reads MRGGYYVLTALFVVASSEIA. Positions 48-65 match the RxLR-dEER motif; the sequence is RFLRESRGVHGNVANEER. Disordered stretches follow at residues 326–345, 351–370, 376–401, and 433–455; these read SKGQ…TSKG, IKRS…LPSI, SSKS…KRSR, and PRSA…APSS.

This sequence belongs to the RxLR effector family.

It localises to the secreted. It is found in the host nucleus. Functionally, secreted effector that acts as an elicitor that induces cell death in host plant cells. This chain is Secreted RxLR effector protein 102, found in Plasmopara viticola (Downy mildew of grapevine).